Here is a 317-residue protein sequence, read N- to C-terminus: Annexin A13 (317 aa).

The N-myristoyl glycine moiety is linked to residue Gly2. Annexin repeat units follow at residues 15-86 (FDAD…ALLD), 87-158 (RPNE…SLLQ), 170-242 (ELAG…TIVR), and 246-317 (DLEG…ALLH).

Belongs to the annexin family. Monomer and homodimer. In terms of tissue distribution, detected on the tips of microvilli in small intestine (at protein level).

The protein localises to the apical cell membrane. It is found in the cell membrane. Its subcellular location is the cytoplasmic vesicle. Functionally, binds to membranes enriched in phosphatidylserine or phosphatidylglycerol in a calcium-dependent manner. Half-maximal membrane binding requires about 60 uM calcium. Does not bind to membranes that lack phospholipids with an acidic headgroup. This is Annexin A13 (Anxa13) from Mus musculus (Mouse).